Consider the following 330-residue polypeptide: MKVFYDSDFKLDALKEKTIAVIGYGSQGRAQSLNMKDSGLNVVVGLRKNGASWENAKADGHNVMTIEEAAEKADIIHILIPDELQAEVYESQIKPYLKEGKTLSFSHGFNIHYGFIVPPKGVNVVLVAPKSPGKMVRRTYEEGFGVPGLICIEIDATNNAFDIVSAMAKGIGLSRAGVIQTTFKEETETDLFGEQAVLCGGVTELIKAGFETLVEAGYAPEMAYFETCHELKLIVDLIYQKGFKNMWNDVSNTAEYGGLTRRSRIVTADSKAAMKEILKEIQDGRFTKEFVLEKQVNHAHLKAMRRIEGDLQIEEVGAKLRKMCGLEKEE.

The 181-residue stretch at 1 to 181 folds into the KARI N-terminal Rossmann domain; that stretch reads MKVFYDSDFK…GLSRAGVIQT (181 aa). NADP(+) is bound by residues 24 to 27, arginine 47, serine 52, and 82 to 85; these read YGSQ and DELQ. Histidine 107 is a catalytic residue. Residue glycine 133 coordinates NADP(+). The 146-residue stretch at 182–327 folds into the KARI C-terminal knotted domain; it reads TFKEETETDL…AKLRKMCGLE (146 aa). Positions 190, 194, 226, and 230 each coordinate Mg(2+). Residue serine 251 participates in substrate binding.

The protein belongs to the ketol-acid reductoisomerase family. Mg(2+) serves as cofactor.

The enzyme catalyses (2R)-2,3-dihydroxy-3-methylbutanoate + NADP(+) = (2S)-2-acetolactate + NADPH + H(+). The catalysed reaction is (2R,3R)-2,3-dihydroxy-3-methylpentanoate + NADP(+) = (S)-2-ethyl-2-hydroxy-3-oxobutanoate + NADPH + H(+). It participates in amino-acid biosynthesis; L-isoleucine biosynthesis; L-isoleucine from 2-oxobutanoate: step 2/4. It functions in the pathway amino-acid biosynthesis; L-valine biosynthesis; L-valine from pyruvate: step 2/4. Its function is as follows. Involved in the biosynthesis of branched-chain amino acids (BCAA). Catalyzes an alkyl-migration followed by a ketol-acid reduction of (S)-2-acetolactate (S2AL) to yield (R)-2,3-dihydroxy-isovalerate. In the isomerase reaction, S2AL is rearranged via a Mg-dependent methyl migration to produce 3-hydroxy-3-methyl-2-ketobutyrate (HMKB). In the reductase reaction, this 2-ketoacid undergoes a metal-dependent reduction by NADPH to yield (R)-2,3-dihydroxy-isovalerate. In Methanococcus maripaludis (strain C5 / ATCC BAA-1333), this protein is Ketol-acid reductoisomerase (NADP(+)).